A 482-amino-acid polypeptide reads, in one-letter code: Glutamate--tRNA ligase (482 aa).

The short motif at 10-20 (PSPTGFLHIGN) is the 'HIGH' region element. The short motif at 253–257 (KLSKR) is the 'KMSKS' region element. Lysine 256 contributes to the ATP binding site.

It belongs to the class-I aminoacyl-tRNA synthetase family. Glutamate--tRNA ligase type 1 subfamily. As to quaternary structure, monomer.

The protein localises to the cytoplasm. It carries out the reaction tRNA(Glu) + L-glutamate + ATP = L-glutamyl-tRNA(Glu) + AMP + diphosphate. Catalyzes the attachment of glutamate to tRNA(Glu) in a two-step reaction: glutamate is first activated by ATP to form Glu-AMP and then transferred to the acceptor end of tRNA(Glu). The chain is Glutamate--tRNA ligase from Mesoplasma florum (strain ATCC 33453 / NBRC 100688 / NCTC 11704 / L1) (Acholeplasma florum).